We begin with the raw amino-acid sequence, 335 residues long: Flagellar P-ring protein (335 aa).

The N-terminal stretch at 1-17 is a signal peptide; sequence MNKPMLMLITFATSLLA.

Belongs to the FlgI family. The basal body constitutes a major portion of the flagellar organelle and consists of four rings (L,P,S, and M) mounted on a central rod.

It localises to the periplasm. It is found in the bacterial flagellum basal body. Assembles around the rod to form the L-ring and probably protects the motor/basal body from shearing forces during rotation. This chain is Flagellar P-ring protein, found in Borreliella burgdorferi (strain ZS7) (Borrelia burgdorferi).